The sequence spans 496 residues: UDP-glycosyltransferase 73C3 (496 aa).

Residues S297, 357–359, 374–382, and 396–399 contribute to the UDP-alpha-D-glucose site; these read APQ, HCGWNSTLE, and FGDQ.

This sequence belongs to the UDP-glycosyltransferase family.

This chain is UDP-glycosyltransferase 73C3 (UGT73C3), found in Arabidopsis thaliana (Mouse-ear cress).